The following is a 78-amino-acid chain: Putative membrane protein insertion efficiency factor (78 aa).

Belongs to the UPF0161 family.

It is found in the cell inner membrane. Could be involved in insertion of integral membrane proteins into the membrane. The protein is Putative membrane protein insertion efficiency factor of Thiobacillus denitrificans (strain ATCC 25259 / T1).